Here is a 159-residue protein sequence, read N- to C-terminus: Cytochrome c-type biogenesis CcmH-like mitochondrial protein (159 aa).

Residues 1–82 are Mitochondrial intermembrane-facing; that stretch reads MEKTDEERKK…ETVLYAPKFD (82 aa). 2 residues coordinate heme: cysteine 27 and cysteine 30. A helical transmembrane segment spans residues 83 to 105; sequence LQTAALWLTPVIIAGGTAAGIVY. Residues 106–159 lie on the Mitochondrial matrix side of the membrane; the sequence is QKHRLRKNVDIMALNLIRGVPLTPKERVTILDVLIPPSPPPQGVVSRLRRWLNR.

It belongs to the CcmH/CycL/Ccl2/NrfF family. In terms of assembly, interacts (via N-terminus) with CYTC-1. Interacts with CCMFN1 and CCMFN2.

Its subcellular location is the mitochondrion inner membrane. Its function is as follows. Plays a central role in mitochondrial cytochrome c maturation. Probable component of a heme lyase complex involved in the reduction of apocytochrome c. Forms a complex with CCMF proteins (CCMFC, CCMFN1 and CCMFN2) that performs the assembly of heme with c-type apocytochromes in mitochondria. The chain is Cytochrome c-type biogenesis CcmH-like mitochondrial protein from Arabidopsis thaliana (Mouse-ear cress).